Consider the following 137-residue polypeptide: Small ribosomal subunit protein bS6 (137 aa).

The segment at 96–137 (ITEASPMAKAKDERDTRRSSEERAPRAEATEEVKESAENTAE) is disordered. Basic and acidic residues predominate over residues 104-137 (KAKDERDTRRSSEERAPRAEATEEVKESAENTAE).

The protein belongs to the bacterial ribosomal protein bS6 family.

Functionally, binds together with bS18 to 16S ribosomal RNA. The chain is Small ribosomal subunit protein bS6 from Shewanella piezotolerans (strain WP3 / JCM 13877).